The primary structure comprises 226 residues: Gap junction beta-2 protein (226 aa).

Residues 2–13 lie within the membrane without spanning it; sequence DWGALQTILGGV. Residues 14-20 lie on the Cytoplasmic side of the membrane; sequence NKYSTSI. A helical transmembrane segment spans residues 21-40; that stretch reads GKIWLTVLFIFRIMILVVAA. Residues 41–73 are Extracellular-facing; sequence KEVWGDEQADFVCNTLQPGCKNVCYDHYFPISH. Ca(2+)-binding residues include Glu42, Gly45, and Glu47. Intrachain disulfides connect Cys53-Cys180, Cys60-Cys174, and Cys64-Cys169. The chain crosses the membrane as a helical span at residues 74-94; sequence IRLWALQLIFVSTPALLVAMH. Residues 95–135 lie on the Cytoplasmic side of the membrane; that stretch reads VAYRRHEKKRKFIKGEIKNEFKDIEEIKTQKVRIEGSLWWT. A helical transmembrane segment spans residues 136–156; it reads YTSSIFFRVVFEAAFMYVFYV. At 157 to 189 the chain is on the extracellular side; sequence MYDGFSMQRLVKCNAWPCPNTVDCFVSRPTEKT. A helical membrane pass occupies residues 190–210; sequence VFTVFMIAVSGICILLNVTEL. Residues 211–226 are Cytoplasmic-facing; that stretch reads CYLLIRYCSGKSKKPV.

Belongs to the connexin family. Beta-type (group I) subfamily. As to quaternary structure, a hemichannel or connexon is composed of a hexamer of connexins. A functional gap junction is formed by the apposition of two hemichannels. Forms heteromeric channels with GJB4. Interacts with CNST.

Its subcellular location is the cell membrane. It localises to the cell junction. The protein localises to the gap junction. Its function is as follows. Structural component of gap junctions. Gap junctions are dodecameric channels that connect the cytoplasm of adjoining cells. They are formed by the docking of two hexameric hemichannels, one from each cell membrane. Small molecules and ions diffuse from one cell to a neighboring cell via the central pore. The protein is Gap junction beta-2 protein (GJB2) of Macaca mulatta (Rhesus macaque).